Reading from the N-terminus, the 154-residue chain is Cell cycle regulator of non-homologous end joining (154 aa).

N-acetylmethionine is present on Met1. Positions 1-21 match the KBM motif; that stretch reads METLKSENKKRVLPSWMTAPV. The segment at 77 to 144 is disordered; the sequence is EEPTLVAPDK…RSPEEEEEDA (68 aa). Residues 95 to 105 show a composition bias toward low complexity; that stretch reads ASPHTSSPGSS. An XLM motif is present at residues 144–154; that stretch reads ALKYVREIFFS.

Interacts (via KBM motif) with XRCC5/Ku80 and XRCC6/Ku70 heterodimer. Interacts (via XLF motif) with TRIM28/KAP1, ATM, MRE11, NBN and RAD50. Interacts with splicing factor SF3B1. Interacts with ERCC6L2; this interaction is DNA independent.

The protein localises to the cytoplasm. The protein resides in the nucleus. It is found in the chromosome. Its function is as follows. Cell-cycle-specific regulator of classical non-homologous end joining (NHEJ) of DNA double-strand break (DSB) repair, which can act both as an activator or inhibitor of NHEJ, depending on the cell cycle phase. Acts as a regulator of DNA repair pathway choice by specifically inhibiting classical NHEJ during the S and G2 phases, thereby promoting error-free repair by homologous recombination during cell cycle phases when sister chromatids are present. Preferentially protects single-stranded overhangs at break sites by inhibiting classical NHEJ, thereby creating a local environment that favors homologous recombination. Acts via interaction with XRCC5/Ku80 and XRCC6/Ku70. In contrast, acts as an activator of NHEJ during G1 phase of the cell cycle: promotes classical NHEJ in G1 phase cells via multivalent interactions that increase the affinity of DNA damage response proteins for DSB-associated chromatin. Also involved in immunoglobulin V(D)J recombination. May act as a regulator of proteasome. In case of infection by a retrovirus, may regulate the proteasome during the uncoating phase of retrovirus. This Cricetulus griseus (Chinese hamster) protein is Cell cycle regulator of non-homologous end joining.